The sequence spans 347 residues: GTPase Obg (347 aa).

Positions 1–158 (MFIDNVKLVL…LSVRLELKLI (158 aa)) constitute an Obg domain. In terms of domain architecture, OBG-type G spans 159–339 (ADVGLVGFPN…LKFMLLEEVK (181 aa)). GTP-binding positions include 165-172 (GFPNVGKS), 190-194 (FTTLT), 212-215 (DIPG), 280-283 (SKSD), and 320-322 (SSL). Mg(2+) is bound by residues S172 and T192.

The protein belongs to the TRAFAC class OBG-HflX-like GTPase superfamily. OBG GTPase family. In terms of assembly, monomer. Mg(2+) is required as a cofactor.

Its subcellular location is the cytoplasm. Its function is as follows. An essential GTPase which binds GTP, GDP and possibly (p)ppGpp with moderate affinity, with high nucleotide exchange rates and a fairly low GTP hydrolysis rate. Plays a role in control of the cell cycle, stress response, ribosome biogenesis and in those bacteria that undergo differentiation, in morphogenesis control. The chain is GTPase Obg from Campylobacter lari (strain RM2100 / D67 / ATCC BAA-1060).